The primary structure comprises 114 residues: Fumarate reductase subunit D (114 aa).

The next 3 membrane-spanning stretches (helical) occupy residues 24-44 (VSAI…PFGL), 50-70 (LITF…TIFP), and 92-112 (GGFI…FAVI).

This sequence belongs to the FrdD family. In terms of assembly, part of an enzyme complex containing four subunits: a flavoprotein (FrdA), an iron-sulfur protein (FrdB), and two hydrophobic anchor proteins (FrdC and FrdD).

Its subcellular location is the cell inner membrane. In terms of biological role, anchors the catalytic components of the fumarate reductase complex to the cell membrane, binds quinones. This is Fumarate reductase subunit D from Haemophilus influenzae (strain PittEE).